We begin with the raw amino-acid sequence, 346 residues long: Histidinol-phosphate aminotransferase (346 aa).

The residue at position 209 (K209) is an N6-(pyridoxal phosphate)lysine.

This sequence belongs to the class-II pyridoxal-phosphate-dependent aminotransferase family. Histidinol-phosphate aminotransferase subfamily. Homodimer. Pyridoxal 5'-phosphate serves as cofactor.

It carries out the reaction L-histidinol phosphate + 2-oxoglutarate = 3-(imidazol-4-yl)-2-oxopropyl phosphate + L-glutamate. The protein operates within amino-acid biosynthesis; L-histidine biosynthesis; L-histidine from 5-phospho-alpha-D-ribose 1-diphosphate: step 7/9. The sequence is that of Histidinol-phosphate aminotransferase from Aliivibrio fischeri (strain ATCC 700601 / ES114) (Vibrio fischeri).